The following is a 66-amino-acid chain: Small ribosomal subunit protein bS21 (66 aa).

Belongs to the bacterial ribosomal protein bS21 family.

The sequence is that of Small ribosomal subunit protein bS21 from Rickettsia felis (strain ATCC VR-1525 / URRWXCal2) (Rickettsia azadi).